We begin with the raw amino-acid sequence, 869 residues long: Alanine--tRNA ligase (869 aa).

The Zn(2+) site is built by His559, His563, Cys660, and His664.

This sequence belongs to the class-II aminoacyl-tRNA synthetase family. It depends on Zn(2+) as a cofactor.

It localises to the cytoplasm. The enzyme catalyses tRNA(Ala) + L-alanine + ATP = L-alanyl-tRNA(Ala) + AMP + diphosphate. In terms of biological role, catalyzes the attachment of alanine to tRNA(Ala) in a two-step reaction: alanine is first activated by ATP to form Ala-AMP and then transferred to the acceptor end of tRNA(Ala). Also edits incorrectly charged Ser-tRNA(Ala) and Gly-tRNA(Ala) via its editing domain. The sequence is that of Alanine--tRNA ligase from Janthinobacterium sp. (strain Marseille) (Minibacterium massiliensis).